The following is a 344-amino-acid chain: Centromere protein L (344 aa).

The interval 1–32 (MAGGRPAGSAIEMEGAMRTLPSSGRPSGTGWQ) is disordered. Positions 20-32 (LPSSGRPSGTGWQ) are enriched in polar residues.

The protein belongs to the CENP-L/IML3 family. Component of the CENPA-HI complex, at least composed of CENPH, CENPI, CENPK, CENPL, CENPM, CENPO and CENPP.

Its subcellular location is the nucleus. The protein localises to the chromosome. It is found in the centromere. Component of the CENPA-HI complex, a centromeric complex involved in assembly of kinetochore proteins, mitotic progression and chromosome segregation. The protein is Centromere protein L (CENPL) of Gallus gallus (Chicken).